A 177-amino-acid polypeptide reads, in one-letter code: Large ribosomal subunit protein uL6 (177 aa).

Over residues 152–171 (RPPEPYKGKGVRYDDEEVRR) the composition is skewed to basic and acidic residues. The tract at residues 152–177 (RPPEPYKGKGVRYDDEEVRRKEAKKK) is disordered.

The protein belongs to the universal ribosomal protein uL6 family. Part of the 50S ribosomal subunit.

In terms of biological role, this protein binds to the 23S rRNA, and is important in its secondary structure. It is located near the subunit interface in the base of the L7/L12 stalk, and near the tRNA binding site of the peptidyltransferase center. This is Large ribosomal subunit protein uL6 from Shewanella oneidensis (strain ATCC 700550 / JCM 31522 / CIP 106686 / LMG 19005 / NCIMB 14063 / MR-1).